We begin with the raw amino-acid sequence, 217 residues long: LSM12 homolog A (217 aa).

In terms of domain architecture, Sm spans 9-78 (VNAVNDCFSI…CSNVQVIKEC (70 aa)). The AD domain occupies 86–184 (QKLNLEQVKM…IIKQFFNTRP (99 aa)). Residues 185–217 (SPVPESGAAASTSSPSVSPTSSSLASGSPVPAN) form a disordered region. A compositionally biased stretch (low complexity) spans 190-217 (SGAAASTSSPSVSPTSSSLASGSPVPAN).

This sequence belongs to the LSM12 family. In terms of assembly, component of the Atx2-tyf activator complex, composed of Atx2, tyf, pAbp, Lsm12a. Interacts with tyf, Atx2 and pAbp.

Its function is as follows. Component of the Atx2-tyf activator complex which functions in the circadian pacemaker neurons to activate the TYF-dependent translation of per and maintain 24 hour periodicity in circadian behaviors. Within the Atx2-tyf complex, likely to function as a molecular adapter which stabilizes the interaction between Atx2 and the translational regulator tyf. This is LSM12 homolog A from Drosophila melanogaster (Fruit fly).